We begin with the raw amino-acid sequence, 81 residues long: Small ribosomal subunit protein bS16 (81 aa).

Belongs to the bacterial ribosomal protein bS16 family.

The chain is Small ribosomal subunit protein bS16 from Phytoplasma mali (strain AT).